The primary structure comprises 61 residues: Protein MATERNALLY EXPRESSED GENE 6 (61 aa).

An intrachain disulfide couples Cys-38 to Cys-60.

It belongs to the MEG family. In terms of tissue distribution, ubiquitous.

The sequence is that of Protein MATERNALLY EXPRESSED GENE 6 (MEG6) from Zea mays (Maize).